A 307-amino-acid polypeptide reads, in one-letter code: Putative S-adenosyl-L-methionine-dependent methyltransferase MMAR_4570 (307 aa).

S-adenosyl-L-methionine is bound by residues Asp-128 and 157–158; that span reads DL.

The protein belongs to the UPF0677 family.

Its function is as follows. Exhibits S-adenosyl-L-methionine-dependent methyltransferase activity. The protein is Putative S-adenosyl-L-methionine-dependent methyltransferase MMAR_4570 of Mycobacterium marinum (strain ATCC BAA-535 / M).